We begin with the raw amino-acid sequence, 355 residues long: uncharacterized protein (355 aa).

This sequence belongs to the serpin family. Poxviruses subfamily.

This is an uncharacterized protein from Vertebrata (FPV).